The following is a 216-amino-acid chain: Uracil phosphoribosyltransferase (216 aa).

Residue 30 to 34 participates in GTP binding; that stretch reads KNLVK. Residues Arg80, Arg105, and 140–148 contribute to the 5-phospho-alpha-D-ribose 1-diphosphate site; that span reads DPMIATGST. Residues Ile203 and 208–210 contribute to the uracil site; that span reads GDA. Asp209 serves as a coordination point for 5-phospho-alpha-D-ribose 1-diphosphate.

Belongs to the UPRTase family. It depends on Mg(2+) as a cofactor.

The catalysed reaction is UMP + diphosphate = 5-phospho-alpha-D-ribose 1-diphosphate + uracil. The protein operates within pyrimidine metabolism; UMP biosynthesis via salvage pathway; UMP from uracil: step 1/1. Allosterically activated by GTP. In terms of biological role, catalyzes the conversion of uracil and 5-phospho-alpha-D-ribose 1-diphosphate (PRPP) to UMP and diphosphate. The sequence is that of Uracil phosphoribosyltransferase from Sulfolobus acidocaldarius (strain ATCC 33909 / DSM 639 / JCM 8929 / NBRC 15157 / NCIMB 11770).